A 408-amino-acid polypeptide reads, in one-letter code: Probable pectate lyase 18 (408 aa).

Positions 1-24 (MKMQTKKLFITIVSFLLYAPLFLS) are cleaved as a signal peptide. A glycan (N-linked (GlcNAc...) asparagine) is linked at Asn-42. The Ca(2+) site is built by Asp-206, Asp-230, and Asp-234. The active site involves Arg-286.

Belongs to the polysaccharide lyase 1 family. Ca(2+) serves as cofactor. As to expression, expressed in flowers, but not in leaves.

It carries out the reaction Eliminative cleavage of (1-&gt;4)-alpha-D-galacturonan to give oligosaccharides with 4-deoxy-alpha-D-galact-4-enuronosyl groups at their non-reducing ends.. Its pathway is glycan metabolism; pectin degradation; 2-dehydro-3-deoxy-D-gluconate from pectin: step 2/5. The chain is Probable pectate lyase 18 from Arabidopsis thaliana (Mouse-ear cress).